We begin with the raw amino-acid sequence, 159 residues long: Dihydrofolate reductase (159 aa).

Positions methionine 1–arginine 158 constitute a DHFR domain. Isoleucine 5 contacts substrate. NADP(+) contacts are provided by residues alanine 7 and valine 13 to alanine 19. Substrate is bound at residue aspartate 27. Position 45–46 (leucine 45–threonine 46) interacts with NADP(+). Substrate-binding residues include arginine 52 and arginine 57. Residues serine 63–serine 64, lysine 76, and glycine 95–glutamine 102 each bind NADP(+). Threonine 113 is a substrate binding site.

Belongs to the dihydrofolate reductase family.

It catalyses the reaction (6S)-5,6,7,8-tetrahydrofolate + NADP(+) = 7,8-dihydrofolate + NADPH + H(+). The protein operates within cofactor biosynthesis; tetrahydrofolate biosynthesis; 5,6,7,8-tetrahydrofolate from 7,8-dihydrofolate: step 1/1. Its function is as follows. Key enzyme in folate metabolism. Catalyzes an essential reaction for de novo glycine and purine synthesis, and for DNA precursor synthesis. The chain is Dihydrofolate reductase (folA) from Klebsiella aerogenes (Enterobacter aerogenes).